Consider the following 362-residue polypeptide: Mannan endo-1,4-beta-mannosidase (362 aa).

The first 26 residues, 1-26 (MFKKHTISLLIIFLLASAVLAKPIEA), serve as a signal peptide directing secretion. A GH26 domain is found at 38-349 (QTTKTVMNWL…YHDSWTLNKG (312 aa)). H131 serves as a coordination point for substrate. The active-site Proton donor is E193. Substrate-binding residues include W198 and Y268. E292 serves as the catalytic Nucleophile. 324–325 (WN) serves as a coordination point for substrate.

The protein belongs to the glycosyl hydrolase 26 family. In terms of assembly, homodimer.

Its subcellular location is the secreted. The enzyme catalyses Random hydrolysis of (1-&gt;4)-beta-D-mannosidic linkages in mannans, galactomannans and glucomannans.. Functionally, involved in the degradation of glucomannan. Catalyzes the endo hydrolysis of beta-1,4-linked mannan, galactomannan and glucomannan. This chain is Mannan endo-1,4-beta-mannosidase, found in Bacillus subtilis (strain 168).